The primary structure comprises 378 residues: Chaperone protein DnaJ (378 aa).

In terms of domain architecture, J spans 5-70 (DFYEVLGLSK…QKRAAYDQYG (66 aa)). The segment at 133 to 211 (GITKEIRIPT…CHGDGRVERY (79 aa)) adopts a CR-type zinc-finger fold. Positions 146, 149, 163, 166, 185, 188, 199, and 202 each coordinate Zn(2+). 4 CXXCXGXG motif repeats span residues 146–153 (CDKCHGSG), 163–170 (CSTCHGAG), 185–192 (CPTCHGRG), and 199–206 (CSKCHGDG).

It belongs to the DnaJ family. As to quaternary structure, homodimer. Zn(2+) serves as cofactor.

The protein resides in the cytoplasm. Functionally, participates actively in the response to hyperosmotic and heat shock by preventing the aggregation of stress-denatured proteins and by disaggregating proteins, also in an autonomous, DnaK-independent fashion. Unfolded proteins bind initially to DnaJ; upon interaction with the DnaJ-bound protein, DnaK hydrolyzes its bound ATP, resulting in the formation of a stable complex. GrpE releases ADP from DnaK; ATP binding to DnaK triggers the release of the substrate protein, thus completing the reaction cycle. Several rounds of ATP-dependent interactions between DnaJ, DnaK and GrpE are required for fully efficient folding. Also involved, together with DnaK and GrpE, in the DNA replication of plasmids through activation of initiation proteins. This chain is Chaperone protein DnaJ, found in Proteus mirabilis (strain HI4320).